A 234-amino-acid chain; its full sequence is Phosphoribosylaminoimidazole-succinocarboxamide synthase (234 aa).

The protein belongs to the SAICAR synthetase family.

The catalysed reaction is 5-amino-1-(5-phospho-D-ribosyl)imidazole-4-carboxylate + L-aspartate + ATP = (2S)-2-[5-amino-1-(5-phospho-beta-D-ribosyl)imidazole-4-carboxamido]succinate + ADP + phosphate + 2 H(+). It participates in purine metabolism; IMP biosynthesis via de novo pathway; 5-amino-1-(5-phospho-D-ribosyl)imidazole-4-carboxamide from 5-amino-1-(5-phospho-D-ribosyl)imidazole-4-carboxylate: step 1/2. This Clostridium botulinum (strain Loch Maree / Type A3) protein is Phosphoribosylaminoimidazole-succinocarboxamide synthase.